The primary structure comprises 470 residues: Uronate isomerase (470 aa).

Belongs to the metallo-dependent hydrolases superfamily. Uronate isomerase family.

The enzyme catalyses D-glucuronate = D-fructuronate. It catalyses the reaction aldehydo-D-galacturonate = keto-D-tagaturonate. The protein operates within carbohydrate metabolism; pentose and glucuronate interconversion. This chain is Uronate isomerase, found in Salmonella paratyphi A (strain ATCC 9150 / SARB42).